A 386-amino-acid polypeptide reads, in one-letter code: EARP and GARP complex-interacting protein 1 (386 aa).

Residue Met1 is modified to N-acetylmethionine. WD repeat units lie at residues 132-172, 182-222, 226-266, and 270-310; these read GAQG…SQAV, RGQL…QIYC, AHGQ…EPVK, and EHSH…SEPF. The disordered stretch occupies residues 312–332; the sequence is HLVDDDDVSDPEEHHTEKSKE. Ser320 carries the post-translational modification Phosphoserine. The span at 322–332 shows a compositional bias: basic and acidic residues; that stretch reads PEEHHTEKSKE. A WD 5 repeat occupies 344–384; the sequence is EHEDSVYAVDWASADPWLFASLSYDGRLVINRVPRALKYHI.

It belongs to the WD repeat EIPR1 family. As to quaternary structure, interacts with two multisubunit tethering complexes: EARP composed of VPS50, VPS51, VPS52 and VPS53 subunits and GARP complex composed of VPS51, VPS52, VPS53 and VPS54 subunits. Interacts with SNAP29. Ubiquitous. Highly expressed in brain, adipose tissue, spleen and kidney (at protein level).

Its subcellular location is the golgi apparatus. The protein resides in the trans-Golgi network. Functionally, acts as a component of endosomal retrieval machinery that is involved in protein transport from early endosomes to either recycling endosomes or the trans-Golgi network. Mediates the recruitment of Golgi-associated retrograde protein (GARP) complex to the trans-Golgi network and controls early endosome-to-Golgi transport of internalized protein. Promotes the recycling of internalized transferrin receptor (TFRC) to the plasma membrane through interaction with endosome-associated recycling protein (EARP) complex. Controls proper insulin distribution and secretion, and retention of cargo in mature dense core vesicles. Required for the stability of the endosome-associated retrograde protein (EARP) complex subunits and for proper localization and association of EARP with membranes. The polypeptide is EARP and GARP complex-interacting protein 1 (Rattus norvegicus (Rat)).